The primary structure comprises 620 residues: Mitochondrial Rho GTPase 2 (620 aa).

Residues 1 to 594 lie on the Cytoplasmic side of the membrane; it reads MKRDVRILLL…ELHTTSFWLR (594 aa). In terms of domain architecture, Miro 1 spans 2–168; sequence KRDVRILLLG…FYYAQKAVLH (167 aa). GTP is bound by residues G16, K17, T18, and S19. T18 provides a ligand contact to Mg(2+). P35 and D57 together coordinate Mg(2+). Residue S59 coordinates GTP. Residue K96 forms a Glycyl lysine isopeptide (Lys-Gly) (interchain with G-Cter in ubiquitin) linkage. GTP is bound by residues N118, K119, D121, A149, and K150. Residue K119 forms a Glycyl lysine isopeptide (Lys-Gly) (interchain with G-Cter in ubiquitin) linkage. Residue K164 forms a Glycyl lysine isopeptide (Lys-Gly) (interchain with G-Cter in ubiquitin) linkage. EF-hand domains lie at 184-219 and 304-339; these read ACAQALTRIFRLSDQDMDQALSDQELNAFQTCCFGH and HGYQFAQRMLEKHDQDRDGALSPAELESLFSVFPGP. Residues D197, D199, D201, E208, D317, D319, D321, and E328 each contribute to the Ca(2+) site. The disordered stretch occupies residues 340–364; the sequence is PWGPQLPRHRPHRGRSAAPARVPLP. In terms of domain architecture, Miro 2 spans 415–578; that stretch reads RNVLLCKVLG…FARLATMATF (164 aa). Positions 427, 429, 430, and 431 each coordinate GTP. Mg(2+) is bound by residues S431 and E473. GTP contacts are provided by K527, D529, and C558. A helical; Anchor for type IV membrane protein transmembrane segment spans residues 595–617; sequence VALGAVGAAVAAILSFSLYRVLV. Residues 618 to 620 are Mitochondrial intermembrane-facing; sequence KSR.

The protein belongs to the mitochondrial Rho GTPase family. Homodimer. Interacts with the kinesin-binding proteins TRAK1/OIP106 and TRAK2/GRIF1, forming a link between mitochondria and the trafficking apparatus of the microtubules. Interacts with ARMCX3. Found in a complex with KIF5B, OGT, RHOT1 and TRAK1. In terms of processing, ubiquitinated by PRKN in a PINK1-dependent manner, leading to its degradation.

The protein resides in the mitochondrion outer membrane. It carries out the reaction GTP + H2O = GDP + phosphate + H(+). It catalyses the reaction ATP + H2O = ADP + phosphate + H(+). The enzyme catalyses UTP + H2O = UDP + phosphate + H(+). Its function is as follows. Atypical mitochondrial nucleoside-triphosphatase (NTPase) involved in mitochondrial trafficking. Probably involved in control of anterograde transport of mitochondria and their subcellular distribution. Can hydrolyze GTP, ATP and UTP. The chain is Mitochondrial Rho GTPase 2 (RHOT2) from Sus scrofa (Pig).